The primary structure comprises 368 residues: UDP-galactose/UDP-N-acetylglucosamine transporter srf-3 (368 aa).

Transmembrane regions (helical) follow at residues 72 to 92 (FVST…CLFL), 118 to 138 (LKVC…YVAA), 145 to 165 (TFMI…VIIL), 174 to 194 (WFAL…GTKA), 203 to 223 (FVGF…GIYF), 235 to 254 (LWMR…FSAI), 273 to 293 (SIVW…AVCI), and 317 to 337 (IFLF…LVIF).

The protein belongs to the nucleotide-sugar transporter family. SLC35A subfamily. In terms of tissue distribution, expressed exclusively in pharyngeal cells g1 and g2, lateral seam cells, spermatheca and vas deferens.

It is found in the golgi apparatus membrane. Functionally, acts as a transporter of both UDP-galactose and UDP-N-acetylglucosamine into the Golgi lumen. Apparently transports UDP-galactose and UDP-N-acetylglucosamine simultaneously, and independently, by an unknown mechanism. Functions redundantly with nucleotide sugar transporter nstp-4. May be involved in gonadal development. The protein is UDP-galactose/UDP-N-acetylglucosamine transporter srf-3 (srf-3) of Caenorhabditis elegans.